Consider the following 227-residue polypeptide: Translation initiation factor 6 (227 aa).

The protein belongs to the eIF-6 family.

In terms of biological role, binds to the 50S ribosomal subunit and prevents its association with the 30S ribosomal subunit to form the 70S initiation complex. In Staphylothermus marinus (strain ATCC 43588 / DSM 3639 / JCM 9404 / F1), this protein is Translation initiation factor 6.